Consider the following 274-residue polypeptide: Formamidopyrimidine-DNA glycosylase (274 aa).

Residue Pro2 is the Schiff-base intermediate with DNA of the active site. Glu3 acts as the Proton donor in catalysis. Lys59 functions as the Proton donor; for beta-elimination activity in the catalytic mechanism. DNA-binding residues include His93, Arg112, and Arg155. The segment at 240 to 274 adopts an FPG-type zinc-finger fold; it reads QVYGRTGRPCPRCGQPLERVRLGGRSTHFCPRCQV. The active-site Proton donor; for delta-elimination activity is Arg264.

Belongs to the FPG family. Monomer. The cofactor is Zn(2+).

It catalyses the reaction Hydrolysis of DNA containing ring-opened 7-methylguanine residues, releasing 2,6-diamino-4-hydroxy-5-(N-methyl)formamidopyrimidine.. It carries out the reaction 2'-deoxyribonucleotide-(2'-deoxyribose 5'-phosphate)-2'-deoxyribonucleotide-DNA = a 3'-end 2'-deoxyribonucleotide-(2,3-dehydro-2,3-deoxyribose 5'-phosphate)-DNA + a 5'-end 5'-phospho-2'-deoxyribonucleoside-DNA + H(+). Functionally, involved in base excision repair of DNA damaged by oxidation or by mutagenic agents. Acts as a DNA glycosylase that recognizes and removes damaged bases. Has a preference for oxidized purines, such as 7,8-dihydro-8-oxoguanine (8-oxoG). Has AP (apurinic/apyrimidinic) lyase activity and introduces nicks in the DNA strand. Cleaves the DNA backbone by beta-delta elimination to generate a single-strand break at the site of the removed base with both 3'- and 5'-phosphates. This chain is Formamidopyrimidine-DNA glycosylase, found in Moorella thermoacetica (strain ATCC 39073 / JCM 9320).